Here is a 252-residue protein sequence, read N- to C-terminus: Electron transfer flavoprotein subunit beta (252 aa).

Belongs to the ETF beta-subunit/FixA family. In terms of assembly, heterodimer of an alpha and a beta subunit. AMP is required as a cofactor.

The protein localises to the cytoplasm. It functions in the pathway lipid metabolism; butanoate metabolism. Its function is as follows. Part of an electron transfer flavoprotein involved in syntrophic growth of S.wolfei with butyrate. Probably receives electrons from butyryl-CoA dehydrogenases, and transfers them to the membrane-bound quinone oxidoreductase Swol_0698. The chain is Electron transfer flavoprotein subunit beta from Syntrophomonas wolfei subsp. wolfei (strain DSM 2245B / Goettingen).